Reading from the N-terminus, the 108-residue chain is Insulin (108 aa).

A signal peptide spans methionine 1–alanine 24. Cystine bridges form between cysteine 31/cysteine 94, cysteine 43/cysteine 107, and cysteine 93/cysteine 98. Residues glutamate 57–glutamine 85 constitute a propeptide, c peptide.

It belongs to the insulin family. In terms of assembly, heterodimer of a B chain and an A chain linked by two disulfide bonds.

The protein localises to the secreted. Insulin decreases blood glucose concentration. It increases cell permeability to monosaccharides, amino acids and fatty acids. It accelerates glycolysis, the pentose phosphate cycle, and glycogen synthesis in liver. This is Insulin (INS) from Sus scrofa (Pig).